The chain runs to 146 residues: Hemoglobin subunit beta (146 aa).

The region spanning 2–146 is the Globin domain; that stretch reads HWSAEEKQLI…VAHALARKYH (145 aa). Heme b-binding residues include histidine 63 and histidine 92.

This sequence belongs to the globin family. As to quaternary structure, heterotetramer of two alpha chains and two beta chains. As to expression, red blood cells.

Involved in oxygen transport from the lung to the various peripheral tissues. This is Hemoglobin subunit beta (HBB) from Psittacula krameri (Rose-ringed parakeet).